A 434-amino-acid chain; its full sequence is MTTQVVNVIGAGLAGSEAAYQIAKRGVQVRLYEMRPVRQTPAHHTDKFAELVCSNSLRANTLTNAVGVIKEEMRLMDSVIIRAADECSVPAGGALAVDRHEFAAKVTEYVKNHPNVTVVNEEITKIPEGPTVIATGPLTSPDLSAQLKELTGEDYFYFYDAAAPIVEKDSIDMNKVYLKSRYDKGEAAYLNCPMTEEEFDRFYEALIAAETVPLKEFEKEIFFEGCMPVEVMASRGRQTLVFGPMKPVGLEDPKTGKTPYAVVQLRQDDAAGTLYNIVGFQTHLKWGPQKEVLQLIPGLENAEIVRYGVMHRNTFINSPNLLRPTYQYKQRDDLFFAGQMTGVEGYVESAASGLLAGINAARLVKGEEPVVLPPVTAMGSMANYITATNAKNFQPMNANFGLFAPLEKKIKKKAERNEAYATRALETIRNFVNI.

10-15 (GAGLAG) lines the FAD pocket.

It belongs to the MnmG family. TrmFO subfamily. FAD serves as cofactor.

The protein localises to the cytoplasm. It catalyses the reaction uridine(54) in tRNA + (6R)-5,10-methylene-5,6,7,8-tetrahydrofolate + NADH + H(+) = 5-methyluridine(54) in tRNA + (6S)-5,6,7,8-tetrahydrofolate + NAD(+). The catalysed reaction is uridine(54) in tRNA + (6R)-5,10-methylene-5,6,7,8-tetrahydrofolate + NADPH + H(+) = 5-methyluridine(54) in tRNA + (6S)-5,6,7,8-tetrahydrofolate + NADP(+). Functionally, catalyzes the folate-dependent formation of 5-methyl-uridine at position 54 (M-5-U54) in all tRNAs. The chain is Methylenetetrahydrofolate--tRNA-(uracil-5-)-methyltransferase TrmFO from Bacillus cereus (strain Q1).